The chain runs to 65 residues: Putative antitoxin MJECL31 (65 aa).

This sequence belongs to the UPF0165 family.

In terms of biological role, possibly the antitoxin component of a type II toxin-antitoxin (TA) system. This is Putative antitoxin MJECL31 from Methanocaldococcus jannaschii (strain ATCC 43067 / DSM 2661 / JAL-1 / JCM 10045 / NBRC 100440) (Methanococcus jannaschii).